Here is a 350-residue protein sequence, read N- to C-terminus: tRNA-splicing endonuclease (350 aa).

Residues Tyr286, His297, and Lys328 contribute to the active site.

It belongs to the tRNA-intron endonuclease family. Archaeal long subfamily. As to quaternary structure, homodimer.

It carries out the reaction pretRNA = a 3'-half-tRNA molecule with a 5'-OH end + a 5'-half-tRNA molecule with a 2',3'-cyclic phosphate end + an intron with a 2',3'-cyclic phosphate and a 5'-hydroxyl terminus.. Endonuclease that removes tRNA introns. Cleaves pre-tRNA at the 5'- and 3'-splice sites to release the intron. The products are an intron and two tRNA half-molecules bearing 2',3' cyclic phosphate and 5'-OH termini. Recognizes a pseudosymmetric substrate in which 2 bulged loops of 3 bases are separated by a stem of 4 bp. The polypeptide is tRNA-splicing endonuclease (Methanosarcina barkeri (strain Fusaro / DSM 804)).